Here is a 601-residue protein sequence, read N- to C-terminus: Oligoendopeptidase F, plasmid (601 aa).

His-387 is a Zn(2+) binding site. The active site involves Glu-388. Zn(2+) is bound by residues His-391 and His-394.

This sequence belongs to the peptidase M3B family. Zn(2+) is required as a cofactor.

Functionally, hydrolyzes peptides containing between 7 and 17 amino acids with a rather wide specificity. This Lactococcus lactis subsp. cremoris (Streptococcus cremoris) protein is Oligoendopeptidase F, plasmid (pepF1).